The following is a 150-amino-acid chain: Transcription antitermination protein NusB (150 aa).

The protein belongs to the NusB family.

Its function is as follows. Involved in transcription antitermination. Required for transcription of ribosomal RNA (rRNA) genes. Binds specifically to the boxA antiterminator sequence of the ribosomal RNA (rrn) operons. The chain is Transcription antitermination protein NusB from Chloroflexus aggregans (strain MD-66 / DSM 9485).